We begin with the raw amino-acid sequence, 344 residues long: MIVLGIESSCDETGVGVVKLDGEGNLEILADSVASSMQEHARFGGVVPEIASRAHLESMVPVMREALRQAGVDRPDAVAATVGPGLAGALLVGASAAKAYAAAWGVPFYAVNHLGGHVAVANLEGETLPHAVALLVSGGHTQLLEVDAVGLPMKELGSTLDDAAGEAYDKVSRLLGLGYPGGPIIDKLARRGNPEAIAFPRGLMKKSDSRHDFSFSGLKTSVARYVEAAERNGEVISVEDVCASFQEAVCDVLTFKAVRACRDVGAKVLLLGGGVAANSRLRELAQERCDKADIELRVPRFNLCTDNGVMIAALAAQRIHEGAQESPISVGTDPSLSVETPQVF.

Residues His113 and His117 each contribute to the Fe cation site. Substrate contacts are provided by residues 135 to 139 (LVSGG), Asp169, Gly182, Asp186, and Asn278. Asp306 serves as a coordination point for Fe cation. The interval 325 to 344 (ESPISVGTDPSLSVETPQVF) is disordered. A compositionally biased stretch (polar residues) spans 326–344 (SPISVGTDPSLSVETPQVF).

It belongs to the KAE1 / TsaD family. The cofactor is Fe(2+).

It is found in the cytoplasm. The enzyme catalyses L-threonylcarbamoyladenylate + adenosine(37) in tRNA = N(6)-L-threonylcarbamoyladenosine(37) in tRNA + AMP + H(+). In terms of biological role, required for the formation of a threonylcarbamoyl group on adenosine at position 37 (t(6)A37) in tRNAs that read codons beginning with adenine. Is involved in the transfer of the threonylcarbamoyl moiety of threonylcarbamoyl-AMP (TC-AMP) to the N6 group of A37, together with TsaE and TsaB. TsaD likely plays a direct catalytic role in this reaction. The protein is tRNA N6-adenosine threonylcarbamoyltransferase of Corynebacterium glutamicum (strain ATCC 13032 / DSM 20300 / JCM 1318 / BCRC 11384 / CCUG 27702 / LMG 3730 / NBRC 12168 / NCIMB 10025 / NRRL B-2784 / 534).